A 227-amino-acid polypeptide reads, in one-letter code: Ubiquitin domain-containing protein 1 (227 aa).

Over residues 1-14 (MGGCVGRERAETRG) the composition is skewed to basic and acidic residues. The tract at residues 1–45 (MGGCVGRERAETRGRGSRTQRKRGGRNEPLKKDKPKWKSDYPMTE) is disordered. Basic residues predominate over residues 15–24 (RGSRTQRKRG). The segment covering 25–39 (GRNEPLKKDKPKWKS) has biased composition (basic and acidic residues). The region spanning 150–225 (FQLKVRLSTG…IQVIVNQPAP (76 aa)) is the Ubiquitin-like domain.

Its function is as follows. May be involved in the regulation of cellular senescence through a positive feedback loop with TP53. The protein is Ubiquitin domain-containing protein 1 (ubtd1) of Danio rerio (Zebrafish).